Here is a 209-residue protein sequence, read N- to C-terminus: Protein-L-isoaspartate O-methyltransferase (209 aa).

Ser-59 is a catalytic residue.

This sequence belongs to the methyltransferase superfamily. L-isoaspartyl/D-aspartyl protein methyltransferase family.

Its subcellular location is the cytoplasm. It carries out the reaction [protein]-L-isoaspartate + S-adenosyl-L-methionine = [protein]-L-isoaspartate alpha-methyl ester + S-adenosyl-L-homocysteine. In terms of biological role, catalyzes the methyl esterification of L-isoaspartyl residues in peptides and proteins that result from spontaneous decomposition of normal L-aspartyl and L-asparaginyl residues. It plays a role in the repair and/or degradation of damaged proteins. This is Protein-L-isoaspartate O-methyltransferase from Helicobacter pylori (strain G27).